The following is a 339-amino-acid chain: Phenylalanine--tRNA ligase alpha subunit (339 aa).

Position 254 (E254) interacts with Mg(2+).

This sequence belongs to the class-II aminoacyl-tRNA synthetase family. Phe-tRNA synthetase alpha subunit type 1 subfamily. As to quaternary structure, tetramer of two alpha and two beta subunits. Mg(2+) serves as cofactor.

The protein localises to the cytoplasm. It catalyses the reaction tRNA(Phe) + L-phenylalanine + ATP = L-phenylalanyl-tRNA(Phe) + AMP + diphosphate + H(+). The chain is Phenylalanine--tRNA ligase alpha subunit from Lachnoclostridium phytofermentans (strain ATCC 700394 / DSM 18823 / ISDg) (Clostridium phytofermentans).